Consider the following 79-residue polypeptide: Conotoxin Vi6.3 (79 aa).

Residues 1 to 22 (MKLTCVLIITVLFLTASQLITA) form the signal peptide. A propeptide spanning residues 23 to 47 (DYSRDQRQYRAVRLGDEMRNFKGAR) is cleaved from the precursor. Intrachain disulfides connect cysteine 49–cysteine 62, cysteine 56–cysteine 67, and cysteine 61–cysteine 77. 4-hydroxyproline occurs at positions 60 and 63.

Belongs to the conotoxin O1 superfamily. As to expression, expressed by the venom duct.

It localises to the secreted. Ion channel inhibitor that inhibits the increase in intracellular calcium upon depolarization in DRG neurons. In vivo, both intraperitoneal and intracranial injections into mice induce hyperactivity. The chain is Conotoxin Vi6.3 from Conus virgo (Virgin cone).